The chain runs to 315 residues: GTP cyclohydrolase MptA (315 aa).

The protein belongs to the GTP cyclohydrolase IV family. Homodimer. The cofactor is Fe(2+).

It carries out the reaction GTP + H2O = 7,8-dihydroneopterin 2',3'-cyclic phosphate + formate + diphosphate + H(+). It participates in cofactor biosynthesis; 5,6,7,8-tetrahydromethanopterin biosynthesis. Its function is as follows. Converts GTP to 7,8-dihydro-D-neopterin 2',3'-cyclic phosphate, the first intermediate in the biosynthesis of coenzyme methanopterin. The chain is GTP cyclohydrolase MptA from Methanococcus maripaludis (strain DSM 14266 / JCM 13030 / NBRC 101832 / S2 / LL).